We begin with the raw amino-acid sequence, 21 residues long: Dahlein-5.5 (21 aa).

Expressed by the skin dorsal glands.

Its subcellular location is the secreted. Functionally, has no antimicrobial activity. Strongly inhibits the formation of NO by neuronal nitric oxide synthase at micromolar concentrations. The polypeptide is Dahlein-5.5 (Ranoidea dahlii (Dahl's aquatic frog)).